The primary structure comprises 882 residues: Bifunctional heparan sulfate N-deacetylase/N-sulfotransferase 1 (882 aa).

Over 1-17 (MPALACLRRLCRHVSPQ) the chain is Cytoplasmic. The interval 1 to 169 (MPALACLRRL…VAYGVGIIGF (169 aa)) is sufficient for localization to Golgi membrane. A helical; Signal-anchor for type II membrane protein membrane pass occupies residues 18–39 (AVLFLLFIFCLFSVFISAYYLY). A heparan sulfate N-deacetylase 1 region spans residues 40 to 598 (GWKRGLEPSA…KRHKDIWSKE (559 aa)). Over 40–882 (GWKRGLEPSA…WLREDLQNTR (843 aa)) the chain is Lumenal. N-linked (GlcNAc...) asparagine glycans are attached at residues Asn231, Asn351, and Asn401. A heparan sulfate N-sulfotransferase 1 region spans residues 599–882 (KTCDRFPKLL…WLREDLQNTR (284 aa)). Lys614 functions as the For sulfotransferase activity in the catalytic mechanism. 614 to 618 (KTGTT) is a binding site for adenosine 3',5'-bisphosphate. Asn667 carries an N-linked (GlcNAc...) asparagine glycan. Residues Ser712 and Trp817 each contribute to the adenosine 3',5'-bisphosphate site. A disulfide bridge connects residues Cys818 and Cys828. 833 to 837 (KGRKY) contacts adenosine 3',5'-bisphosphate.

It belongs to the sulfotransferase 1 family. NDST subfamily. As to quaternary structure, monomer. In terms of assembly, interacts with heparan sulfate co-polymerase subunits EXT1 and EXT2. Interacts with NDST1 isoform 3. Interacts with heparan sulfate co-polymerase subunits EXT1 and EXT2. Interacts with NDST1 isoform 1. Widely expressed. Expression is most abundant in heart, liver and pancreas.

The protein resides in the golgi apparatus. Its subcellular location is the trans-Golgi network membrane. It localises to the cis-Golgi network membrane. The enzyme catalyses N-acetyl-alpha-D-glucosaminyl-[heparan sulfate](n) + H2O = alpha-D-glucosaminyl-[heparan sulfate](n) + acetate. It carries out the reaction alpha-D-glucosaminyl-[heparan sulfate](n) + 3'-phosphoadenylyl sulfate = N-sulfo-alpha-D-glucosaminyl-[heparan sulfate](n) + adenosine 3',5'-bisphosphate + 2 H(+). Its pathway is glycan metabolism; heparan sulfate biosynthesis. It functions in the pathway glycan metabolism; heparin biosynthesis. Functionally, essential bifunctional enzyme that catalyzes both the N-deacetylation and the N-sulfation of glucosamine (GlcNAc) of the glycosaminoglycan in heparan sulfate. Modifies the GlcNAc-GlcA disaccharide repeating sugar backbone to make N-sulfated heparosan, a prerequisite substrate for later modifications in heparin biosynthesis. Plays a role in determining the extent and pattern of sulfation of heparan sulfate. Participates in biosynthesis of heparan sulfate that can ultimately serve as L-selectin ligands, thereby playing a role in inflammatory response. Required for the exosomal release of SDCBP, CD63 and syndecan. Its function is as follows. Lacks both N-deacetylase and N-sulfotransferase activities. Acts as a dominant negative on isoform 1, likely by changing the composition of enzyme complexes responsible for elongation and modification of heparan sulfates. This Homo sapiens (Human) protein is Bifunctional heparan sulfate N-deacetylase/N-sulfotransferase 1.